The sequence spans 279 residues: Protein NipSnap homolog 1 (279 aa).

Belongs to the NipSnap family.

The protein resides in the mitochondrion matrix. Its function is as follows. Protein involved in mitophagy. Accumulates on the mitochondria surface in response to mitochondrial depolarization and acts as a 'eat me' signal by recruiting proteins involved in selective autophagy. In Danio rerio (Zebrafish), this protein is Protein NipSnap homolog 1.